Reading from the N-terminus, the 147-residue chain is Large ribosomal subunit protein uL11 (147 aa).

The protein belongs to the universal ribosomal protein uL11 family. Part of the ribosomal stalk of the 50S ribosomal subunit. Interacts with L10 and the large rRNA to form the base of the stalk. L10 forms an elongated spine to which L12 dimers bind in a sequential fashion forming a multimeric L10(L12)X complex. One or more lysine residues are methylated.

Its function is as follows. Forms part of the ribosomal stalk which helps the ribosome interact with GTP-bound translation factors. This is Large ribosomal subunit protein uL11 from Parabacteroides distasonis (strain ATCC 8503 / DSM 20701 / CIP 104284 / JCM 5825 / NCTC 11152).